The following is a 263-amino-acid chain: Ret finger protein-like 4B (263 aa).

Residues cysteine 11 to arginine 53 form an RING-type zinc finger. Residues histidine 76–proline 263 form the B30.2/SPRY domain.

This is Ret finger protein-like 4B (RFPL4B) from Homo sapiens (Human).